The primary structure comprises 638 residues: Exocyst complex component EXO70A1 (638 aa).

The disordered stretch occupies residues 163 to 190 (FDGLPNSLRPSSDGDGGGKPHGGHHNDD).

This sequence belongs to the EXO70 family. The exocyst complex is composed of SEC3, SEC5, SEC6, SEC8, SEC10, EXO70A1 and EXO84B. Interacts with SEC3A and EXO84B. Co-localizes with FPP3/VETH1, FPP2/VETH2 and COG2 in vesicle-like small motile compartments. May interact with COG2.

The protein localises to the cytoplasm. It is found in the cytosol. Its subcellular location is the cytoskeleton. The protein resides in the phragmoplast. It localises to the cell membrane. The protein localises to the secreted. It is found in the cell wall. In terms of biological role, component of the exocyst complex involved in the docking of exocytic vesicles with fusion sites on the plasma membrane during regulated or polarized secretion. Involved in polarized cell growth and organ morphogenesis. Involved in polarized cell growth and organ morphogenesis. During cytokinesis, involved in cell plate initiation, cell plate maturation and formation of new primary cell wall. Participates in polarized pectin delivery required for the polarized development of the mucilage-producing volcano cells of the seed coat. Involved in the recycling and localization of auxin efflux carriers PIN1 and PIN2, and thus in polar auxin transport regulation. Functions in vesicle trafficking in tracheary elements to regulate patterned secondary cell wall (SCW) thickening. The chain is Exocyst complex component EXO70A1 from Arabidopsis thaliana (Mouse-ear cress).